We begin with the raw amino-acid sequence, 193 residues long: Cbp/p300-interacting transactivator 1 (193 aa).

Disordered regions lie at residues 1–26, 50–88, and 106–147; these read MPTT…NQEM, VASN…LHPA, and GMAA…SPAI. Over residues 54–73 the composition is skewed to low complexity; sequence GTKASGAPTSSSGSPIGSPT. Residues 158 to 167 carry the Nuclear export signal motif; it reads LMSLVVELGL.

The protein belongs to the CITED family. In terms of assembly, interacts (via C-terminus) with CREBBP. Interacts with EGR2. Homodimer. Binds to RBM14. Interacts (via N-terminus) with HSPA8; the interaction suppresses the association of CITED1 with p300/CBP and SMAD-mediated transcription transactivation. Interacts (via C-terminus) with TOX3 (via HGM box); the interaction increases estrogen-response element (ERE)-dependent transcription and protection against cell death. Interacts with ESR1; the interaction occurs in a estrogen-dependent manner. Interacts (unphosphorylated form preferentially and via C-terminus) with EP300. In terms of processing, phosphorylated. Phosphorylation changes in a cell cycle-dependent manner and reduces its transcriptional coactivator activity. In terms of tissue distribution, expressed only in melanocytes and testis.

The protein localises to the nucleus. Its subcellular location is the cytoplasm. Its function is as follows. Transcriptional coactivator of the p300/CBP-mediated transcription complex. Enhances SMAD-mediated transcription by strengthening the functional link between the DNA-binding SMAD transcription factors and the p300/CBP transcription coactivator complex. Stimulates estrogen-dependent transactivation activity mediated by estrogen receptors signaling; stabilizes the interaction of estrogen receptor ESR1 and histone acetyltransferase EP300. Positively regulates TGF-beta signaling through its association with the SMAD/p300/CBP-mediated transcriptional coactivator complex. Induces transcription from estrogen-responsive promoters and protection against cell death. Potentiates EGR2-mediated transcriptional activation activity from the ERBB2 promoter. Acts as an inhibitor of osteoblastic mineralization through a cAMP-dependent parathyroid hormone receptor signaling. May play a role in pigmentation of melanocytes. Associates with chromatin to the estrogen-responsive TGF-alpha promoter region in a estrogen-dependent manner. The chain is Cbp/p300-interacting transactivator 1 (CITED1) from Homo sapiens (Human).